The following is a 503-amino-acid chain: Glycerol kinase (503 aa).

Position 14 (Thr14) interacts with ADP. ATP is bound by residues Thr14, Thr15, and Ser16. Thr14 is a binding site for sn-glycerol 3-phosphate. ADP is bound at residue Arg18. Sn-glycerol 3-phosphate contacts are provided by Arg84, Glu85, Tyr136, and Asp246. Positions 84, 85, 136, 246, and 247 each coordinate glycerol. ADP is bound by residues Thr268 and Gly311. ATP-binding residues include Thr268, Gly311, Gln315, and Gly412. The ADP site is built by Gly412 and Asn416.

It belongs to the FGGY kinase family.

The enzyme catalyses glycerol + ATP = sn-glycerol 3-phosphate + ADP + H(+). The protein operates within polyol metabolism; glycerol degradation via glycerol kinase pathway; sn-glycerol 3-phosphate from glycerol: step 1/1. With respect to regulation, inhibited by fructose 1,6-bisphosphate (FBP). Functionally, key enzyme in the regulation of glycerol uptake and metabolism. Catalyzes the phosphorylation of glycerol to yield sn-glycerol 3-phosphate. The chain is Glycerol kinase from Haemophilus influenzae (strain PittEE).